Reading from the N-terminus, the 196-residue chain is Nucleoid occlusion factor SlmA (196 aa).

The 62-residue stretch at 7–68 (SNRREEILQA…GLIEFIEEAL (62 aa)) folds into the HTH tetR-type domain. A DNA-binding region (H-T-H motif) is located at residues 31–50 (TTVKLAKQVGVSEAALYRHF). Residues 65–142 (EEALMSRINR…QLRQILRERK (78 aa)) adopt a coiled-coil conformation.

This sequence belongs to the nucleoid occlusion factor SlmA family. In terms of assembly, homodimer. Interacts with FtsZ.

The protein localises to the cytoplasm. It localises to the nucleoid. Functionally, required for nucleoid occlusion (NO) phenomenon, which prevents Z-ring formation and cell division over the nucleoid. Acts as a DNA-associated cell division inhibitor that binds simultaneously chromosomal DNA and FtsZ, and disrupts the assembly of FtsZ polymers. SlmA-DNA-binding sequences (SBS) are dispersed on non-Ter regions of the chromosome, preventing FtsZ polymerization at these regions. In Vibrio atlanticus (strain LGP32) (Vibrio splendidus (strain Mel32)), this protein is Nucleoid occlusion factor SlmA.